A 303-amino-acid chain; its full sequence is Methionyl-tRNA formyltransferase (303 aa).

108–111 (SDLP) is a binding site for (6S)-5,6,7,8-tetrahydrofolate.

It belongs to the Fmt family.

It carries out the reaction L-methionyl-tRNA(fMet) + (6R)-10-formyltetrahydrofolate = N-formyl-L-methionyl-tRNA(fMet) + (6S)-5,6,7,8-tetrahydrofolate + H(+). In terms of biological role, attaches a formyl group to the free amino group of methionyl-tRNA(fMet). The formyl group appears to play a dual role in the initiator identity of N-formylmethionyl-tRNA by promoting its recognition by IF2 and preventing the misappropriation of this tRNA by the elongation apparatus. This chain is Methionyl-tRNA formyltransferase, found in Rickettsia canadensis (strain McKiel).